Consider the following 347-residue polypeptide: Endophilin-A3 (347 aa).

The segment at 1 to 21 is membrane-binding amphipathic helix; that stretch reads MSVAGLKKQFHKASQLFSEKI. The BAR domain maps to 18–249; that stretch reads SEKISGAEGT…LELRIALASQ (232 aa). Residues 60–87 are required for dimerization upon membrane association; that stretch reads PNPAYRAKLGMLNTMSKLRGQVKATGYP. Positions 180 to 201 form a coiled coil; it reads EEEIRQAVEKFEESKELAERSM. The interaction with ARC stretch occupies residues 218–254; the sequence is FVEAALDYHRQSTEILQELQNKLELRIALASQVPRRD. Residues 255-284 form a disordered region; the sequence is YMPKPVNTSSTNANGVEPSSSSKLTGTDIP. Positions 260 to 284 are enriched in polar residues; sequence VNTSSTNANGVEPSSSSKLTGTDIP. Residues 285-344 enclose the SH3 domain; that stretch reads SDQPCCRGLYDFEPENEGELGFKEGDIITLTNQIDENWYEGMLRGESGFFPINYVEVIVP.

It belongs to the endophilin family. In terms of assembly, interacts with SGIP1 and DYDC1. Interacts with FASLG. Interacts with ATXN2. Interacts with BIN2. Interacts with ARC, DNM1 and SYNJ1. In terms of tissue distribution, expressed at high level in testis and at lower level in brain and liver.

The protein localises to the cytoplasm. It is found in the early endosome membrane. Implicated in endocytosis. May recruit other proteins to membranes with high curvature. This chain is Endophilin-A3 (Sh3gl3), found in Rattus norvegicus (Rat).